The following is a 141-amino-acid chain: Large ribosomal subunit protein uL11 (141 aa).

This sequence belongs to the universal ribosomal protein uL11 family. As to quaternary structure, part of the ribosomal stalk of the 50S ribosomal subunit. Interacts with L10 and the large rRNA to form the base of the stalk. L10 forms an elongated spine to which L12 dimers bind in a sequential fashion forming a multimeric L10(L12)X complex. In terms of processing, one or more lysine residues are methylated.

Its function is as follows. Forms part of the ribosomal stalk which helps the ribosome interact with GTP-bound translation factors. This Chloroflexus aurantiacus (strain ATCC 29366 / DSM 635 / J-10-fl) protein is Large ribosomal subunit protein uL11.